A 477-amino-acid polypeptide reads, in one-letter code: Bifunctional protein HldE (477 aa).

Residues 1 to 318 (MKVTLPEFER…ENAVRGRADT (318 aa)) form a ribokinase region. The residue at position 179 (Lys-179) is an N6-acetyllysine. 195–198 (NLSE) lines the ATP pocket. Asp-264 is an active-site residue. The interval 344–477 (MTNGVFDILH…IKKIQQDKKG (134 aa)) is cytidylyltransferase.

It in the N-terminal section; belongs to the carbohydrate kinase PfkB family. The protein in the C-terminal section; belongs to the cytidylyltransferase family. As to quaternary structure, homodimer.

It carries out the reaction D-glycero-beta-D-manno-heptose 7-phosphate + ATP = D-glycero-beta-D-manno-heptose 1,7-bisphosphate + ADP + H(+). The catalysed reaction is D-glycero-beta-D-manno-heptose 1-phosphate + ATP + H(+) = ADP-D-glycero-beta-D-manno-heptose + diphosphate. Its pathway is nucleotide-sugar biosynthesis; ADP-L-glycero-beta-D-manno-heptose biosynthesis; ADP-L-glycero-beta-D-manno-heptose from D-glycero-beta-D-manno-heptose 7-phosphate: step 1/4. The protein operates within nucleotide-sugar biosynthesis; ADP-L-glycero-beta-D-manno-heptose biosynthesis; ADP-L-glycero-beta-D-manno-heptose from D-glycero-beta-D-manno-heptose 7-phosphate: step 3/4. Its function is as follows. Catalyzes the phosphorylation of D-glycero-D-manno-heptose 7-phosphate at the C-1 position to selectively form D-glycero-beta-D-manno-heptose-1,7-bisphosphate. In terms of biological role, catalyzes the ADP transfer from ATP to D-glycero-beta-D-manno-heptose 1-phosphate, yielding ADP-D-glycero-beta-D-manno-heptose. The sequence is that of Bifunctional protein HldE from Escherichia fergusonii (strain ATCC 35469 / DSM 13698 / CCUG 18766 / IAM 14443 / JCM 21226 / LMG 7866 / NBRC 102419 / NCTC 12128 / CDC 0568-73).